We begin with the raw amino-acid sequence, 62 residues long: Sec-independent protein translocase protein TatA (62 aa).

Residues 1 to 21 (MFGIGIPELLVIFVLILLVFG) form a helical membrane-spanning segment.

It belongs to the TatA/E family. As to quaternary structure, the Tat system comprises two distinct complexes: a TatABC complex, containing multiple copies of TatA, TatB and TatC subunits, and a separate TatA complex, containing only TatA subunits. Substrates initially bind to the TatABC complex, which probably triggers association of the separate TatA complex to form the active translocon.

It is found in the cell inner membrane. Functionally, part of the twin-arginine translocation (Tat) system that transports large folded proteins containing a characteristic twin-arginine motif in their signal peptide across membranes. TatA could form the protein-conducting channel of the Tat system. The chain is Sec-independent protein translocase protein TatA from Oleidesulfovibrio alaskensis (strain ATCC BAA-1058 / DSM 17464 / G20) (Desulfovibrio alaskensis).